Here is a 72-residue protein sequence, read N- to C-terminus: Disintegrin crotatroxin (72 aa).

The region spanning 1 to 72 (AGEECDCGSP…ADCPRNGLYG (72 aa)) is the Disintegrin domain. Cystine bridges form between Cys5–Cys20, Cys7–Cys15, Cys14–Cys37, Cys28–Cys34, Cys33–Cys58, and Cys46–Cys65. A Cell attachment site motif is present at residues 50 to 52 (RGD).

Belongs to the venom metalloproteinase (M12B) family. P-II subfamily. P-IIa sub-subfamily. In terms of assembly, monomer. In terms of tissue distribution, expressed by the venom gland.

The protein localises to the secreted. Its function is as follows. Inhibits fibrinogen interaction with platelets. Acts by binding to the alpha-IIb/beta-3 (ITGA2B/ITGB3) on the platelet surface and inhibits aggregation induced by ADP, thrombin, platelet-activating factor and collagen. Inhibits ADP-induced platelet aggregation (IC(50) = 17.5nM), cancer cell migration in vitro, and experimental lung tumor colonization of cancer cells. In Crotalus atrox (Western diamondback rattlesnake), this protein is Disintegrin crotatroxin.